A 492-amino-acid chain; its full sequence is 2,3-bisphosphoglycerate-independent phosphoglycerate mutase (492 aa).

Mn(2+)-binding residues include aspartate 11 and serine 61. The active-site Phosphoserine intermediate is serine 61. Substrate contacts are provided by residues histidine 118, 147-148 (RD), arginine 177, arginine 183, 248-251 (RSDR), and lysine 321. Mn(2+) is bound by residues aspartate 387, histidine 391, aspartate 428, histidine 429, and histidine 446.

Belongs to the BPG-independent phosphoglycerate mutase family. As to quaternary structure, monomer. It depends on Mn(2+) as a cofactor.

The catalysed reaction is (2R)-2-phosphoglycerate = (2R)-3-phosphoglycerate. The protein operates within carbohydrate degradation; glycolysis; pyruvate from D-glyceraldehyde 3-phosphate: step 3/5. Catalyzes the interconversion of 2-phosphoglycerate and 3-phosphoglycerate. The protein is 2,3-bisphosphoglycerate-independent phosphoglycerate mutase of Wolinella succinogenes (strain ATCC 29543 / DSM 1740 / CCUG 13145 / JCM 31913 / LMG 7466 / NCTC 11488 / FDC 602W) (Vibrio succinogenes).